We begin with the raw amino-acid sequence, 1343 residues long: DNA-directed RNA polymerase subunit beta (1343 aa).

It belongs to the RNA polymerase beta chain family. In terms of assembly, the RNAP catalytic core consists of 2 alpha, 1 beta, 1 beta' and 1 omega subunit. When a sigma factor is associated with the core the holoenzyme is formed, which can initiate transcription.

It catalyses the reaction RNA(n) + a ribonucleoside 5'-triphosphate = RNA(n+1) + diphosphate. In terms of biological role, DNA-dependent RNA polymerase catalyzes the transcription of DNA into RNA using the four ribonucleoside triphosphates as substrates. This Shewanella sediminis (strain HAW-EB3) protein is DNA-directed RNA polymerase subunit beta.